Reading from the N-terminus, the 426-residue chain is Glutamate-1-semialdehyde 2,1-aminomutase (426 aa).

Residue lysine 265 is modified to N6-(pyridoxal phosphate)lysine.

It belongs to the class-III pyridoxal-phosphate-dependent aminotransferase family. HemL subfamily. Homodimer. The cofactor is pyridoxal 5'-phosphate.

Its subcellular location is the cytoplasm. It catalyses the reaction (S)-4-amino-5-oxopentanoate = 5-aminolevulinate. Its pathway is porphyrin-containing compound metabolism; protoporphyrin-IX biosynthesis; 5-aminolevulinate from L-glutamyl-tRNA(Glu): step 2/2. The protein is Glutamate-1-semialdehyde 2,1-aminomutase of Salmonella agona (strain SL483).